The sequence spans 486 residues: Cardiolipin synthase A (486 aa).

Transmembrane regions (helical) follow at residues 3 to 23 (TFYTVVSWLVILGYWILIAGV) and 38 to 58 (MAWLLIIYILPLVGIIAYLSF). PLD phosphodiesterase domains follow at residues 219–246 (MDLRQHRKMVMIDNYIAYTGSMNMVDPR) and 399–426 (EGGLLHTKSVLVDGELSLVGTVNLDMRS). Catalysis depends on residues His-224, Lys-226, Asp-231, His-404, Lys-406, and Asp-411.

The protein belongs to the phospholipase D family. Cardiolipin synthase subfamily. ClsA sub-subfamily.

It is found in the cell inner membrane. The catalysed reaction is 2 a 1,2-diacyl-sn-glycero-3-phospho-(1'-sn-glycerol) = a cardiolipin + glycerol. Catalyzes the reversible phosphatidyl group transfer from one phosphatidylglycerol molecule to another to form cardiolipin (CL) (diphosphatidylglycerol) and glycerol. This chain is Cardiolipin synthase A, found in Citrobacter koseri (strain ATCC BAA-895 / CDC 4225-83 / SGSC4696).